We begin with the raw amino-acid sequence, 126 residues long: Regulatory protein MgsR (126 aa).

A disulfide bridge links Cys13 with Cys16.

It belongs to the ArsC family.

Its subcellular location is the cytoplasm. With respect to regulation, activity is controlled at multiple levels. Regulation includes a positive autoregulatory loop on mgsR transcription and a post-translational redox-sensitive activation step by an intramolecular disulfide bond formation in response to ethanol stress. In addition, protein stability is strictly controlled by rapid proteolytic degradation by the ClpXP and ClpCP proteases. The McsB protein-arginine kinase might serve as a proteolytic adapter for the ClpX ATPase in the degradation mechanism of MgsR. Functionally, regulates transcription of a subregulon within the general stress response. Exerts positive and negative effects in response to ethanol stress. The protein is Regulatory protein MgsR of Bacillus subtilis (strain 168).